We begin with the raw amino-acid sequence, 100 residues long: Urease subunit gamma (100 aa).

This sequence belongs to the urease gamma subunit family. In terms of assembly, heterotrimer of UreA (gamma), UreB (beta) and UreC (alpha) subunits. Three heterotrimers associate to form the active enzyme.

Its subcellular location is the cytoplasm. It catalyses the reaction urea + 2 H2O + H(+) = hydrogencarbonate + 2 NH4(+). It participates in nitrogen metabolism; urea degradation; CO(2) and NH(3) from urea (urease route): step 1/1. The protein is Urease subunit gamma of Rhizobium etli (strain CIAT 652).